Consider the following 188-residue polypeptide: Elongation factor P (188 aa).

Belongs to the elongation factor P family.

The protein localises to the cytoplasm. It functions in the pathway protein biosynthesis; polypeptide chain elongation. Involved in peptide bond synthesis. Stimulates efficient translation and peptide-bond synthesis on native or reconstituted 70S ribosomes in vitro. Probably functions indirectly by altering the affinity of the ribosome for aminoacyl-tRNA, thus increasing their reactivity as acceptors for peptidyl transferase. The chain is Elongation factor P from Rhodopseudomonas palustris (strain ATCC BAA-98 / CGA009).